The following is a 183-amino-acid chain: Translation initiation factor IF-3 (183 aa).

This sequence belongs to the IF-3 family. In terms of assembly, monomer.

Its subcellular location is the cytoplasm. Its function is as follows. IF-3 binds to the 30S ribosomal subunit and shifts the equilibrium between 70S ribosomes and their 50S and 30S subunits in favor of the free subunits, thus enhancing the availability of 30S subunits on which protein synthesis initiation begins. This is Translation initiation factor IF-3 from Serratia marcescens.